The chain runs to 276 residues: MQHPAEHSPLGKSSQYIAEYSPELLFPISRTSKWAELGLDGANLPYQGVDYWNCYELSWLLPSGKPVVAIGEFAIPADSPNIIESKSFKLYLNSLNQTVFASWGELQATLARDLSAVAGKPVAVRLRSLTEVAGEGVATLPGQCIDELEISVTQYAHPQPELLRCDASRVVEESLHSHLLKSNCPVTGQPDWGSLVVQYRGAALDHASLLAYLVSFRQHADFHEQCVERIFLDLQRLLQPQSLTVYARYVRRGGLDINPYRSTEALRVDNARLVRQ.

83-85 is a substrate binding site; that stretch reads IES. Position 85–86 (85–86) interacts with NADPH; the sequence is SK. Catalysis depends on C184, which acts as the Thioimide intermediate. The Proton donor role is filled by D191. 223–224 lines the substrate pocket; that stretch reads HE. NADPH is bound at residue 252 to 253; sequence RG.

This sequence belongs to the GTP cyclohydrolase I family. QueF type 2 subfamily. Homodimer.

Its subcellular location is the cytoplasm. The catalysed reaction is 7-aminomethyl-7-carbaguanine + 2 NADP(+) = 7-cyano-7-deazaguanine + 2 NADPH + 3 H(+). Its pathway is tRNA modification; tRNA-queuosine biosynthesis. Functionally, catalyzes the NADPH-dependent reduction of 7-cyano-7-deazaguanine (preQ0) to 7-aminomethyl-7-deazaguanine (preQ1). In Ectopseudomonas mendocina (strain ymp) (Pseudomonas mendocina), this protein is NADPH-dependent 7-cyano-7-deazaguanine reductase.